A 166-amino-acid polypeptide reads, in one-letter code: NAD(P)H-quinone oxidoreductase subunit I, chloroplastic (166 aa).

2 consecutive 4Fe-4S ferredoxin-type domains span residues 55–84 (GRIH…VDWK) and 95–124 (LNYS…MTEE). The [4Fe-4S] cluster site is built by C64, C67, C70, C74, C104, C107, C110, and C114.

This sequence belongs to the complex I 23 kDa subunit family. NDH is composed of at least 16 different subunits, 5 of which are encoded in the nucleus. Requires [4Fe-4S] cluster as cofactor.

Its subcellular location is the plastid. The protein resides in the chloroplast thylakoid membrane. It carries out the reaction a plastoquinone + NADH + (n+1) H(+)(in) = a plastoquinol + NAD(+) + n H(+)(out). The catalysed reaction is a plastoquinone + NADPH + (n+1) H(+)(in) = a plastoquinol + NADP(+) + n H(+)(out). NDH shuttles electrons from NAD(P)H:plastoquinone, via FMN and iron-sulfur (Fe-S) centers, to quinones in the photosynthetic chain and possibly in a chloroplast respiratory chain. The immediate electron acceptor for the enzyme in this species is believed to be plastoquinone. Couples the redox reaction to proton translocation, and thus conserves the redox energy in a proton gradient. The protein is NAD(P)H-quinone oxidoreductase subunit I, chloroplastic of Palafoxia arida (Spanish needles).